Here is a 326-residue protein sequence, read N- to C-terminus: Undecaprenyl-phosphate 4-deoxy-4-formamido-L-arabinose transferase (326 aa).

A run of 2 helical transmembrane segments spans residues 234 to 254 and 269 to 289; these read LLSI…ILLI and VFTL…GMGL.

This sequence belongs to the glycosyltransferase 2 family.

The protein resides in the cell inner membrane. It catalyses the reaction UDP-4-deoxy-4-formamido-beta-L-arabinose + di-trans,octa-cis-undecaprenyl phosphate = 4-deoxy-4-formamido-alpha-L-arabinopyranosyl di-trans,octa-cis-undecaprenyl phosphate + UDP. The protein operates within glycolipid biosynthesis; 4-amino-4-deoxy-alpha-L-arabinose undecaprenyl phosphate biosynthesis; 4-amino-4-deoxy-alpha-L-arabinose undecaprenyl phosphate from UDP-4-deoxy-4-formamido-beta-L-arabinose and undecaprenyl phosphate: step 1/2. It participates in bacterial outer membrane biogenesis; lipopolysaccharide biosynthesis. Its function is as follows. Catalyzes the transfer of 4-deoxy-4-formamido-L-arabinose from UDP to undecaprenyl phosphate. The modified arabinose is attached to lipid A and is required for resistance to polymyxin and cationic antimicrobial peptides. In Aeromonas hydrophila subsp. hydrophila (strain ATCC 7966 / DSM 30187 / BCRC 13018 / CCUG 14551 / JCM 1027 / KCTC 2358 / NCIMB 9240 / NCTC 8049), this protein is Undecaprenyl-phosphate 4-deoxy-4-formamido-L-arabinose transferase.